The chain runs to 581 residues: Proline--tRNA ligase (581 aa).

It belongs to the class-II aminoacyl-tRNA synthetase family. ProS type 1 subfamily. As to quaternary structure, homodimer.

Its subcellular location is the cytoplasm. It catalyses the reaction tRNA(Pro) + L-proline + ATP = L-prolyl-tRNA(Pro) + AMP + diphosphate. In terms of biological role, catalyzes the attachment of proline to tRNA(Pro) in a two-step reaction: proline is first activated by ATP to form Pro-AMP and then transferred to the acceptor end of tRNA(Pro). As ProRS can inadvertently accommodate and process non-cognate amino acids such as alanine and cysteine, to avoid such errors it has two additional distinct editing activities against alanine. One activity is designated as 'pretransfer' editing and involves the tRNA(Pro)-independent hydrolysis of activated Ala-AMP. The other activity is designated 'posttransfer' editing and involves deacylation of mischarged Ala-tRNA(Pro). The misacylated Cys-tRNA(Pro) is not edited by ProRS. The chain is Proline--tRNA ligase from Rhodococcus opacus (strain B4).